The primary structure comprises 214 residues: Intermembrane phospholipid transport system binding protein MlaC (214 aa).

The N-terminal stretch at M1–A28 is a signal peptide.

The protein belongs to the MlaC/ttg2D family.

It is found in the periplasm. Its function is as follows. Involved in a phospholipid transport pathway that maintains lipid asymmetry in the outer membrane by retrograde trafficking of phospholipids from the outer membrane to the inner membrane. May transfer phospholipid across the periplasmic space and deliver it to the MlaFEDB complex at the inner membrane. The chain is Intermembrane phospholipid transport system binding protein MlaC from Haemophilus influenzae (strain ATCC 51907 / DSM 11121 / KW20 / Rd).